Reading from the N-terminus, the 595-residue chain is Wee1-like protein kinase 1-B (595 aa).

Over residues 1–17 (MNVQPRNMNVQPRNMNV) the composition is skewed to polar residues. A disordered region spans residues 1 to 127 (MNVQPRNMNV…CPGTPPHKTF (127 aa)). Residues 111–122 (PTSPIPECPGTP) show a composition bias toward pro residues. A Phosphothreonine; by cdk1 modification is found at Thr-186. Residues 248-518 (FHELEKIGSG…SVALVKHSVL (271 aa)) enclose the Protein kinase domain. Residues 254-262 (IGSGEFGSV) and Lys-277 each bind ATP. Asp-375 functions as the Proton acceptor in the catalytic mechanism. Mg(2+) is bound by residues Asn-380 and Asp-412. Residues 526-563 (AEQLRIELDAEKFKNALLQKELKKAQIAKAAAEERAHF) adopt a coiled-coil conformation.

This sequence belongs to the protein kinase superfamily. Ser/Thr protein kinase family. WEE1 subfamily. As to quaternary structure, interacts (when phosphorylated at Thr-186) with pin1. In terms of processing, phosphorylation at Thr-186 during M-phase by cdk1 inhibits the kinase activity and leads to interaction with pin1. Zygotically expressed. Present in oocytes and postgastrula embryos (at least until the tailbud stage). Expression begins at the midblastula stage and increases after the early gastrula stage.

Its subcellular location is the nucleus. It catalyses the reaction L-tyrosyl-[protein] + ATP = O-phospho-L-tyrosyl-[protein] + ADP + H(+). Acts as a zygotic negative regulator of entry into mitosis (G2 to M transition) by protecting the nucleus from cytoplasmically activated cyclin B1-complexed cdk1 before the onset of mitosis by mediating phosphorylation of cdk1 on 'Tyr-15'. Specifically phosphorylates and inactivates cyclin B1-complexed cdk1 reaching a maximum during G2 phase and a minimum as cells enter M phase. Phosphorylation of cyclin B1-cdk1 occurs exclusively on 'Tyr-15' and phosphorylation of monomeric cdk1 does not occur. In Xenopus laevis (African clawed frog), this protein is Wee1-like protein kinase 1-B (wee1-b).